The sequence spans 439 residues: Rhodopsin (439 aa).

N-linked (GlcNAc...) asparagine glycosylation occurs at Asn-1. Residues 1–26 lie on the Extracellular side of the membrane; sequence NETWWYNPYMDIHSHWKQFDQVPAAV. The chain crosses the membrane as a helical span at residues 27-51; sequence YYSLGIFIAICGIIGCAGNGIVIYL. The Cytoplasmic portion of the chain corresponds to 52–63; sequence FTKTKSLQTPAN. A helical membrane pass occupies residues 64–90; that stretch reads MFIINLAFSDFTFSLVNGFPMMTISCF. The Extracellular segment spans residues 91–102; it reads LKHWVFGQAACK. A disulfide bridge links Cys-101 with Cys-179. Residues 103-124 traverse the membrane as a helical segment; the sequence is VYGLIGGIFGLTSIMTMTMISI. Residues 125 to 127 carry the 'Ionic lock' involved in activated form stabilization motif; it reads DRY. Topologically, residues 125–144 are cytoplasmic; that stretch reads DRYNVIRRPMSASKKMSHRK. A helical transmembrane segment spans residues 145–165; the sequence is AFIMIVFVWIWSTIWAIGPIF. The Extracellular portion of the chain corresponds to 166-192; it reads GWGAYQLEGVLCNCSFDYITRDASTRS. A helical membrane pass occupies residues 193 to 217; the sequence is NIVCMYIFAFMFPIVVIFFCYFNIV. At 218-254 the chain is on the cytoplasmic side; that stretch reads MSVSNHEKEMAAMAKRLNAKELRKAQAGASAEMKLAK. The chain crosses the membrane as a helical span at residues 255–276; sequence ISIVIVTQSLLSWSPYAIVALL. Residues 277–286 lie on the Extracellular side of the membrane; that stretch reads AQFGPIEWVT. The chain crosses the membrane as a helical span at residues 287–308; it reads PYAAQLPVMFAKASAIHNPMIY. Position 298 is an N6-(retinylidene)lysine (Lys-298). Over 309–439 the chain is Cytoplasmic; it reads SVSHPKFREA…PQAAPPQGVD (131 aa). S-palmitoyl cysteine attachment occurs at residues Cys-329 and Cys-330. The segment covering 369–381 has biased composition (low complexity); that stretch reads MMQKMQAQQQQQP. Residues 369–439 are disordered; the sequence is MMQKMQAQQQ…PQAAPPQGVD (71 aa). A compositionally biased stretch (pro residues) spans 382-433; it reads AYPPQGYPPQGYPPPPPQGYPPQGYPPQGYPPQGYPPPPQGPPPQGPPPQAA.

Belongs to the G-protein coupled receptor 1 family. Opsin subfamily. In terms of processing, contains one covalently linked retinal chromophore. Upon light absorption, the covalently bound 11-cis-retinal is converted to all-trans-retinal. After hydrolysis of the Schiff base and release of the covalently bound all-trans-retinal, active rhodopsin is regenerated by binding of a fresh molecule of 11-cis-retinal.

The protein localises to the cell projection. It is found in the rhabdomere membrane. Its function is as follows. Photoreceptor required for image-forming vision at low light intensity. Light-induced isomerization of 11-cis to all-trans retinal triggers a conformational change that activates signaling via G-proteins. Signaling mediates the activation of phospholipase C. Subsequent receptor phosphorylation mediates displacement of the bound G-protein alpha subunit by arrestin and terminates signaling. The polypeptide is Rhodopsin (RHO) (Alloteuthis subulata (Squid)).